A 106-amino-acid polypeptide reads, in one-letter code: N(2)-fixation sustaining protein CowN (106 aa).

This sequence belongs to the CowN family.

Functionally, is required to sustain N(2)-dependent growth in the presence of low levels of carbon monoxide (CO). Probably acts by protecting the N(2) fixation ability of the nitrogenase complex, which is inactivated in the presence of CO. The sequence is that of N(2)-fixation sustaining protein CowN from Denitrovibrio acetiphilus (strain DSM 12809 / NBRC 114555 / N2460).